We begin with the raw amino-acid sequence, 304 residues long: MGKSLNNVPQAPLDVQFDSNDVKCSAYLYRPTTEVATPMIVMAHGLGGTRRMRLTAFAERFVAEGYACLVFDYRYFGDSEGQPRQLLDIKSQLEDWKAAIAYARSLDKIDPNRVVIWGTSFGGGHVLATAANDNRLAAVISQCPFTDGFSSSMAMNPITTLKLMGLALKDKIGSILGAKPVMVPLAAPSGHTALMNAPDAYSGYLALMPSGSNIPNYVAARFVLDIIRYYPGRKTSRIQAPVLFCVCDTDSVAPSKTTLRHASHTPNHEIKHYADGHFEIYVGEAFERVVRDQIDFLKRIVPVK.

It belongs to the AB hydrolase superfamily.

Its function is as follows. Involved in quorum quenching (QQ). Inhibits motility and biofilm formation. Could contribute in bacterial competition, as it is capable of hydrolyzing the signaling molecules that mediate interspecies communication. This Acinetobacter baumannii (strain MDR-ZJ06) protein is Quorum-quenching protein AidA.